The following is a 270-amino-acid chain: Putative pyruvate, phosphate dikinase regulatory protein (270 aa).

148–155 (GISRTSKT) is a binding site for ADP.

Belongs to the pyruvate, phosphate/water dikinase regulatory protein family. PDRP subfamily.

It carries out the reaction N(tele)-phospho-L-histidyl/L-threonyl-[pyruvate, phosphate dikinase] + ADP = N(tele)-phospho-L-histidyl/O-phospho-L-threonyl-[pyruvate, phosphate dikinase] + AMP + H(+). The catalysed reaction is N(tele)-phospho-L-histidyl/O-phospho-L-threonyl-[pyruvate, phosphate dikinase] + phosphate + H(+) = N(tele)-phospho-L-histidyl/L-threonyl-[pyruvate, phosphate dikinase] + diphosphate. In terms of biological role, bifunctional serine/threonine kinase and phosphorylase involved in the regulation of the pyruvate, phosphate dikinase (PPDK) by catalyzing its phosphorylation/dephosphorylation. The protein is Putative pyruvate, phosphate dikinase regulatory protein of Bacillus cereus (strain AH187).